The following is a 201-amino-acid chain: Holliday junction branch migration complex subunit RuvA (201 aa).

Positions 1–63 are domain I; the sequence is MIEYIKGEIA…EDAYVLYGFA (63 aa). The segment at 64-142 is domain II; the sequence is DKQERELFLL…TGAMAATAVG (79 aa). The segment at 143–153 is flexible linker; the sequence is GAAGALLPAMN. Residues 153–201 are domain III; it reads NAEVQEEAIAALTMLGFAAAPSQKAVLAILKEEPDAPVEKVIKLALKRL.

Belongs to the RuvA family. Homotetramer. Forms an RuvA(8)-RuvB(12)-Holliday junction (HJ) complex. HJ DNA is sandwiched between 2 RuvA tetramers; dsDNA enters through RuvA and exits via RuvB. An RuvB hexamer assembles on each DNA strand where it exits the tetramer. Each RuvB hexamer is contacted by two RuvA subunits (via domain III) on 2 adjacent RuvB subunits; this complex drives branch migration. In the full resolvosome a probable DNA-RuvA(4)-RuvB(12)-RuvC(2) complex forms which resolves the HJ.

The protein resides in the cytoplasm. In terms of biological role, the RuvA-RuvB-RuvC complex processes Holliday junction (HJ) DNA during genetic recombination and DNA repair, while the RuvA-RuvB complex plays an important role in the rescue of blocked DNA replication forks via replication fork reversal (RFR). RuvA specifically binds to HJ cruciform DNA, conferring on it an open structure. The RuvB hexamer acts as an ATP-dependent pump, pulling dsDNA into and through the RuvAB complex. HJ branch migration allows RuvC to scan DNA until it finds its consensus sequence, where it cleaves and resolves the cruciform DNA. The chain is Holliday junction branch migration complex subunit RuvA from Bacteroides fragilis (strain ATCC 25285 / DSM 2151 / CCUG 4856 / JCM 11019 / LMG 10263 / NCTC 9343 / Onslow / VPI 2553 / EN-2).